We begin with the raw amino-acid sequence, 808 residues long: uncharacterized protein (808 aa).

In terms of domain architecture, EF-hand 1 spans 6–41 (SRSEKVKRIFQQFDGNHDGGLNREEMAALVVAVNPR). TPR repeat units lie at residues 234-267 (FDGH…QPTD), 269-301 (RPHF…AESG), 310-343 (PQIY…CPTH), 344-377 (FRAL…KPDY), 378-411 (ADAH…KPGH), 412-445 (VDAL…WPNH), and 447-479 (RAQL…TNRV). In terms of domain architecture, EF-hand 2 spans 600-635 (AIKAINEKILALLDDSGSGRVDMGMFYAVIAPLCGG). The stretch at 773 to 794 (FKQEEYKFREYESEAEAMKAKC) forms a coiled coil.

This is an uncharacterized protein from Arabidopsis thaliana (Mouse-ear cress).